Reading from the N-terminus, the 212-residue chain is MKIIEVDEELYQFIASHTQSIGESASDILRRLLNLPTSSVSSVALETVAVESAEAANPETPSAVKNDFVLEPVAEKSSLEKTVKKQPEQVICHIVNKVRQVIESEAFQHETKAVVRFLAILTALYRTNPEGFSLAIESEQVQGRTRVYFARDEATLLAAGTHTKPKQIPDTPYWVITNNNSGRKMIMLEGVMHGMQLPDELIEDIRGYFIVN.

Interaction with DNA stretches follow at residues 113–114 (AV) and 144–148 (RTRVY).

The protein belongs to the SeqA family. Homodimer. Polymerizes to form helical filaments.

It localises to the cytoplasm. Its function is as follows. Negative regulator of replication initiation, which contributes to regulation of DNA replication and ensures that replication initiation occurs exactly once per chromosome per cell cycle. Binds to pairs of hemimethylated GATC sequences in the oriC region, thus preventing assembly of replication proteins and re-initiation at newly replicated origins. Repression is relieved when the region becomes fully methylated. The chain is Negative modulator of initiation of replication from Actinobacillus succinogenes (strain ATCC 55618 / DSM 22257 / CCUG 43843 / 130Z).